An 80-amino-acid polypeptide reads, in one-letter code: Small ribosomal subunit protein bS18 (80 aa).

This sequence belongs to the bacterial ribosomal protein bS18 family. Part of the 30S ribosomal subunit. Forms a tight heterodimer with protein bS6.

In terms of biological role, binds as a heterodimer with protein bS6 to the central domain of the 16S rRNA, where it helps stabilize the platform of the 30S subunit. The chain is Small ribosomal subunit protein bS18 from Clostridium botulinum (strain 657 / Type Ba4).